Consider the following 199-residue polypeptide: Recombination protein RecR (199 aa).

A C4-type zinc finger spans residues 57-72 (CPICGNITEKEVCDIC). The Toprim domain occupies 80-176 (TTIMVVEQPK…KVTRLAAGLS (97 aa)).

Belongs to the RecR family.

In terms of biological role, may play a role in DNA repair. It seems to be involved in an RecBC-independent recombinational process of DNA repair. It may act with RecF and RecO. The chain is Recombination protein RecR from Lactobacillus helveticus (strain DPC 4571).